The primary structure comprises 123 residues: Large ribosomal subunit protein bL12 (123 aa).

It belongs to the bacterial ribosomal protein bL12 family. As to quaternary structure, homodimer. Part of the ribosomal stalk of the 50S ribosomal subunit. Forms a multimeric L10(L12)X complex, where L10 forms an elongated spine to which 2 to 4 L12 dimers bind in a sequential fashion. Binds GTP-bound translation factors.

Its function is as follows. Forms part of the ribosomal stalk which helps the ribosome interact with GTP-bound translation factors. Is thus essential for accurate translation. The chain is Large ribosomal subunit protein bL12 from Hydrogenovibrio crunogenus (strain DSM 25203 / XCL-2) (Thiomicrospira crunogena).